Here is a 624-residue protein sequence, read N- to C-terminus: MAGKRKRANAPDQTERRSSVRVQKVRQKALDEKARLVQERVKLLSDRKSEICVDDTELHEKEEENVDGSPKRRSPPKLTAMQKGKQKLSVSLNGKDVNLEPHLKVTKCLRLFNKQYLLCVQAKLSRPDLKGVTEMIKAKAILYPRKIIGDLPGIDVGHRFFSRAEMCAVGFHNHWLNGIDYMSMEYEKEYSNYKLPLAVSIVMSGQYEDDLDNADTVTYTGQGGHNLTGNKRQIKDQLLERGNLALKHCCEYNVPVRVTRGHNCKSSYTKRVYTYDGLYKVEKFWAQKGVSGFTVYKYRLKRLEGQPELTTDQVNFVAGRIPTSTSEIEGLVCEDISGGLEFKGIPATNRVDDSPVSPTSGFTYIKSLIIEPNVIIPKSSTGCNCRGSCTDSKKCACAKLNGGNFPYVDLNDGRLIESRDVVFECGPHCGCGPKCVNRTSQKRLRFNLEVFRSAKKGWAVRSWEYIPAGSPVCEYIGVVRRTADVDTISDNEYIFEIDCQQTMQGLGGRQRRLRDVAVPMNNGVSQSSEDENAPEFCIDAGSTGNFARFINHSCEPNLFVQCVLSSHQDIRLARVVLFAADNISPMQELTYDYGYALDSVHGPDGKVKQLACYCGALNCRKRLY.

Disordered stretches follow at residues 1 to 25 (MAGK…VQKV) and 54 to 86 (DDTE…KGKQ). Residues 149 to 302 (GDLPGIDVGH…FTVYKYRLKR (154 aa)) enclose the YDG domain. The Pre-SET domain occupies 381–443 (TGCNCRGSCT…KCVNRTSQKR (63 aa)). Residues Cys383, Cys385, Cys389, Cys395, Cys397, Cys425, Cys429, Cys431, and Cys435 each contribute to the Zn(2+) site. Positions 446-594 (FNLEVFRSAK…PMQELTYDYG (149 aa)) constitute an SET domain. Residues 456–458 (KGW), Tyr493, Arg548, and 551–552 (NH) contribute to the S-adenosyl-L-methionine site. The Zn(2+) site is built by Cys554, Cys612, Cys614, and Cys619. The Post-SET domain occupies 608-624 (KQLACYCGALNCRKRLY).

Belongs to the class V-like SAM-binding methyltransferase superfamily. Histone-lysine methyltransferase family. Suvar3-9 subfamily. In terms of assembly, interacts with H3 histone. In terms of tissue distribution, expressed in leaves stems and flowers.

It localises to the nucleus. The protein localises to the chromosome. The protein resides in the centromere. It catalyses the reaction N(6)-methyl-L-lysyl(9)-[histone H3] + S-adenosyl-L-methionine = N(6),N(6)-dimethyl-L-lysyl(9)-[histone H3] + S-adenosyl-L-homocysteine + H(+). The enzyme catalyses L-lysyl(9)-[histone H3] + S-adenosyl-L-methionine = N(6)-methyl-L-lysyl(9)-[histone H3] + S-adenosyl-L-homocysteine + H(+). Its function is as follows. Histone methyltransferase. Methylates 'Lys-9' of histone H3. H3 'Lys-9' methylation represents a specific tag for epigenetic transcriptional repression. The silencing mechanism via DNA CpNpG methylation requires the targeting of chromomethylase CMT3 to methylated histones, probably through an interaction with an HP1-like adapter. By its function, KYP is directly required for the maintenance of the DNA CpNpG and asymmetric methylation. Involved in the silencing of transposable elements. In Arabidopsis thaliana (Mouse-ear cress), this protein is Histone-lysine N-methyltransferase, H3 lysine-9 specific SUVH4 (SUVH4).